The sequence spans 1000 residues: UPF0182 protein SCO5204 (1000 aa).

Helical transmembrane passes span 26 to 48 (LLLT…GFWT), 70 to 92 (IGLF…WLAH), 121 to 143 (WLLL…GQWR), 177 to 199 (FLLG…THYL), 220 to 237 (LSVL…AYWL), 267 to 289 (LPAK…ATLW), and 296 to 318 (PVIG…PALV). Disordered stretches follow at residues 884–908 (AETE…NPTV) and 943–1000 (EALQ…ADTG). The span at 888–897 (QPPDEGDDTT) shows a compositional bias: acidic residues. Basic and acidic residues-rich tracts occupy residues 943–953 (EALQRAEDAQA) and 963–984 (NGDD…DKAG).

This sequence belongs to the UPF0182 family.

It is found in the cell membrane. The chain is UPF0182 protein SCO5204 from Streptomyces coelicolor (strain ATCC BAA-471 / A3(2) / M145).